A 674-amino-acid chain; its full sequence is Ribonuclease E (674 aa).

Residues 35–117 (GDIYLGLVDN…LTGNISMPGR (83 aa)) enclose the S1 motif domain. The Mg(2+) site is built by aspartate 296 and aspartate 339. 2 residues coordinate Zn(2+): cysteine 397 and cysteine 400. Disordered stretches follow at residues 458-529 (PLDL…RRVE) and 626-674 (QPRE…SSAE). 2 stretches are compositionally biased toward basic and acidic residues: residues 484 to 493 (GSEFSEKENI) and 509 to 529 (TKEKVTGTAPPRRERPSRRVE). The segment covering 663-674 (RPGRRRRRSSAE) has biased composition (basic residues). The C4 Arg-rich motif, probably responsible for interaction with PNPase signature appears at 665-673 (GRRRRRSSA).

The protein belongs to the RNase E/G family. Fractionates in a 250-300 kDa region, which is too small to be the equivalent of an RNA degradosome, as occurs with E.coli RNase E. Interacts with polynucleotide phosphorylase (PNPase, pnp), probably via the C4 Arg-rich motif (residues 665-673). The cofactor is Mg(2+).

Its subcellular location is the cytoplasm. It is found in the cell inner membrane. The catalysed reaction is Endonucleolytic cleavage of single-stranded RNA in A- and U-rich regions.. Its function is as follows. Endoribonuclease that plays a central role in rRNA processing and mRNA decay, and probably tRNA processing. Acts on 9S rRNA (the precursor of 5S rRNA) and RNAI, a molecule that controls the replication of ColE1 plasmid. Upon expression in E.coli does not purify with endogenous degradosome proteins. Prefers 5'-monophosphorylated substrates over 5'-triphosphorylated substrates. Complements an rne temperature-sensitive mutation in E.coli, despite being considerably shorter and not able to interact with the E.coli degradosome. Cleaves AU-rich sequences in vitro, tested with psbA2 mRNA. Complements both an rne temperature-sensitive mutation and an rng deletion in E.coli. Acts in the degradation of psaL mRNA in the presence but not the absence of the sRNA PsrR1. Cleaves the rimO-crhR transcript, contributing to the very short half-life of rimO mRNA. Functionally, mRNA for psbA2, one of the core proteins in photosystem II, is degraded in the dark under control of a cis-acting AU-rich box in its 5'-UTR. RNase E cuts in this box, suggesting it is involved in this dark-induced mRNA instability. CRISPR (clustered regularly interspaced short palindromic repeat) is an adaptive immune system that provides protection against mobile genetic elements (viruses, transposable elements and conjugative plasmids). CRISPR clusters contain spacers, sequences complementary to antecedent mobile elements, and target invading nucleic acids. CRISPR clusters are transcribed and processed into CRISPR RNA (crRNA). Endogenous RNase E is required for correct processing of pre-crRNA for the CRISPR3 subtype III-B system in this genome (genes sll7080 to sll7095). This CRISPR3 system does not include a cas6 gene, which is the usual RNase involved in crRNA maturation. In Synechocystis sp. (strain ATCC 27184 / PCC 6803 / Kazusa), this protein is Ribonuclease E.